The chain runs to 310 residues: Olfactory receptor 4C11 (310 aa).

Topologically, residues Met-1–Lys-23 are extracellular. N-linked (GlcNAc...) asparagine glycosylation is present at Asn-4. The chain crosses the membrane as a helical span at residues Ile-24–Ile-47. The Cytoplasmic segment spans residues Lys-48 to Ser-55. A helical membrane pass occupies residues Pro-56 to Pro-77. The Extracellular portion of the chain corresponds to Arg-78 to Gln-98. A disulfide bridge connects residues Cys-95 and Cys-187. Residues Val-99–Val-118 traverse the membrane as a helical segment. Topologically, residues Asp-119–Gln-137 are cytoplasmic. Residues Val-138–Ala-156 form a helical membrane-spanning segment. At Gln-157–Ile-193 the chain is on the extracellular side. Residues Asn-194–Ile-217 form a helical membrane-spanning segment. Residues Val-218–Lys-233 are Cytoplasmic-facing. The helical transmembrane segment at Ala-234 to Tyr-256 threads the bilayer. Over Thr-257–Lys-267 the chain is Extracellular. A helical membrane pass occupies residues Met-268–Leu-287. The Cytoplasmic portion of the chain corresponds to Arg-288–Gly-310.

Belongs to the G-protein coupled receptor 1 family.

Its subcellular location is the cell membrane. Its function is as follows. Odorant receptor. The polypeptide is Olfactory receptor 4C11 (OR4C11) (Homo sapiens (Human)).